Here is a 116-residue protein sequence, read N- to C-terminus: Large ribosomal subunit protein bL19 (116 aa).

This sequence belongs to the bacterial ribosomal protein bL19 family.

Its function is as follows. This protein is located at the 30S-50S ribosomal subunit interface and may play a role in the structure and function of the aminoacyl-tRNA binding site. This chain is Large ribosomal subunit protein bL19, found in Actinobacillus pleuropneumoniae serotype 5b (strain L20).